Consider the following 69-residue polypeptide: Antimicrobial peptide Eval36 (69 aa).

A signal peptide spans methionine 1–serine 23. A Leucine amide modification is found at leucine 37. The propeptide occupies glycine 38 to arginine 69.

It belongs to the non-disulfide-bridged peptide (NDBP) superfamily. Short antimicrobial peptide (group 4) family. Expressed by the venom gland.

It localises to the secreted. In terms of biological role, probable antimicrobial peptide. Shows low inhibitory activity against herpes simplex virus type 1 (HSV-1). The sequence is that of Antimicrobial peptide Eval36 from Euscorpiops validus (Scorpion).